Reading from the N-terminus, the 193-residue chain is Large ribosomal subunit protein bL25 (193 aa).

Belongs to the bacterial ribosomal protein bL25 family. CTC subfamily. As to quaternary structure, part of the 50S ribosomal subunit; part of the 5S rRNA/L5/L18/L25 subcomplex. Contacts the 5S rRNA. Binds to the 5S rRNA independently of L5 and L18.

In terms of biological role, this is one of the proteins that binds to the 5S RNA in the ribosome where it forms part of the central protuberance. The polypeptide is Large ribosomal subunit protein bL25 (Hydrogenovibrio crunogenus (strain DSM 25203 / XCL-2) (Thiomicrospira crunogena)).